The following is a 473-amino-acid chain: T-box transcription factor TBX6L (473 aa).

The T-box DNA-binding region spans 43–217; the sequence is LWDKFSSIGT…NNPFAKGFRD (175 aa). A disordered region spans residues 342–361; it reads RLNPQETHHNSRPKIQLQPP.

Exclusively expressed by ventral mesendoderm.

Its subcellular location is the nucleus. Probable transcriptional regulator involved in developmental processes. This Danio rerio (Zebrafish) protein is T-box transcription factor TBX6L (tbx6l).